A 653-amino-acid polypeptide reads, in one-letter code: Large subunit GTPase 1 homolog (653 aa).

The segment at Met1–Gln47 is disordered. Residues Trp155–Pro439 enclose the CP-type G domain. Asn203–Asp206 is a GTP binding site. Positions Ala248 to Ala275 are enriched in acidic residues. A disordered region spans residues Ala248–Lys323. Residues Glu276 to Leu291 show a composition bias toward polar residues. Residues Ser293–Gly320 are compositionally biased toward acidic residues. GTP is bound by residues Gly388–Ser395 and Asp432–Gly435. The tract at residues Ala621–Asn653 is disordered. Over residues Pro631 to Asn653 the composition is skewed to basic residues.

This sequence belongs to the TRAFAC class YlqF/YawG GTPase family. LSG1 subfamily.

The protein resides in the cytoplasm. The protein localises to the endoplasmic reticulum. Its subcellular location is the nucleus. It localises to the cajal body. The catalysed reaction is GTP + H2O = GDP + phosphate + H(+). Functionally, GTPase required for the XPO1/CRM1-mediated nuclear export of the 60S ribosomal subunit. Probably acts by mediating the release of NMD3 from the 60S ribosomal subunit after export into the cytoplasm. Functions as a GTPase. May act by mediating the release of NMD3 from the 60S ribosomal subunit after export into the cytoplasm during the 60S ribosomal subunit maturation. The sequence is that of Large subunit GTPase 1 homolog from Gallus gallus (Chicken).